The following is a 183-amino-acid chain: Adenylate kinase (183 aa).

Residue 12 to 17 (GAGKGT) participates in ATP binding. An NMP region spans residues 32–61 (STGDLLRSEVSAGSALGQEAEAVMNRGELV). Residues Thr33, Arg38, 59–61 (ELV), 86–89 (GFPR), and Gln93 each bind AMP. The LID stretch occupies residues 127-133 (ARGRADD). Arg128 provides a ligand contact to ATP. AMP-binding residues include Arg130 and Arg141. An ATP-binding site is contributed by Gly169.

This sequence belongs to the adenylate kinase family. In terms of assembly, monomer.

Its subcellular location is the cytoplasm. The catalysed reaction is AMP + ATP = 2 ADP. Its pathway is purine metabolism; AMP biosynthesis via salvage pathway; AMP from ADP: step 1/1. Functionally, catalyzes the reversible transfer of the terminal phosphate group between ATP and AMP. Plays an important role in cellular energy homeostasis and in adenine nucleotide metabolism. The sequence is that of Adenylate kinase from Synechococcus sp. (strain WH7803).